Reading from the N-terminus, the 323-residue chain is Cyclin-H (323 aa).

Residue S5 is modified to Phosphoserine; by CDK8. The residue at position 132 (S132) is a Phosphoserine. The segment at 299 to 323 (DDDYVPKKSKHEEEEWTDDDLVESL) is disordered. Basic and acidic residues predominate over residues 302-311 (YVPKKSKHEE). The segment covering 312 to 323 (EEWTDDDLVESL) has biased composition (acidic residues). T315 is modified (phosphothreonine). S322 bears the Phosphoserine mark.

Belongs to the cyclin family. Cyclin C subfamily. Associates primarily with CDK7 and MAT1 to form the CAK complex. CAK can further associate with the core-TFIIH to form the TFIIH basal transcription factor.

The protein localises to the nucleus. In terms of biological role, regulates CDK7, the catalytic subunit of the CDK-activating kinase (CAK) enzymatic complex. CAK activates the cyclin-associated kinases CDK1, CDK2, CDK4 and CDK6 by threonine phosphorylation. CAK complexed to the core-TFIIH basal transcription factor activates RNA polymerase II by serine phosphorylation of the repetitive C-terminal domain (CTD) of its large subunit (POLR2A), allowing its escape from the promoter and elongation of the transcripts. Involved in cell cycle control and in RNA transcription by RNA polymerase II. Its expression and activity are constant throughout the cell cycle. The protein is Cyclin-H (CCNH) of Macaca fascicularis (Crab-eating macaque).